The chain runs to 99 residues: Putative membrane protein insertion efficiency factor (99 aa).

It belongs to the UPF0161 family.

The protein localises to the cell inner membrane. In terms of biological role, could be involved in insertion of integral membrane proteins into the membrane. This Salinibacter ruber (strain DSM 13855 / M31) protein is Putative membrane protein insertion efficiency factor.